Consider the following 447-residue polypeptide: Phosphoglucosamine mutase (447 aa).

The Phosphoserine intermediate role is filled by Ser-100. 4 residues coordinate Mg(2+): Ser-100, Asp-239, Asp-241, and Asp-243. Ser-100 bears the Phosphoserine mark.

Belongs to the phosphohexose mutase family. Requires Mg(2+) as cofactor. In terms of processing, activated by phosphorylation.

The enzyme catalyses alpha-D-glucosamine 1-phosphate = D-glucosamine 6-phosphate. Its function is as follows. Catalyzes the conversion of glucosamine-6-phosphate to glucosamine-1-phosphate. The sequence is that of Phosphoglucosamine mutase from Thermoanaerobacter sp. (strain X514).